Here is a 423-residue protein sequence, read N- to C-terminus: Adenylosuccinate synthetase (423 aa).

Residues 12 to 18 (GDEGKGK) and 40 to 42 (GHT) contribute to the GTP site. Aspartate 13 (proton acceptor) is an active-site residue. Mg(2+)-binding residues include aspartate 13 and glycine 40. IMP contacts are provided by residues 13–16 (DEGK), 38–41 (NAGH), threonine 129, arginine 143, glutamine 224, threonine 239, and arginine 303. Catalysis depends on histidine 41, which acts as the Proton donor. Substrate is bound at residue 299-305 (SVTGRQR). GTP-binding positions include arginine 305, 331-333 (KGD), and 412-414 (SVG).

This sequence belongs to the adenylosuccinate synthetase family. In terms of assembly, homodimer. The cofactor is Mg(2+).

The protein localises to the cytoplasm. It catalyses the reaction IMP + L-aspartate + GTP = N(6)-(1,2-dicarboxyethyl)-AMP + GDP + phosphate + 2 H(+). The protein operates within purine metabolism; AMP biosynthesis via de novo pathway; AMP from IMP: step 1/2. In terms of biological role, plays an important role in the de novo pathway of purine nucleotide biosynthesis. Catalyzes the first committed step in the biosynthesis of AMP from IMP. This is Adenylosuccinate synthetase from Flavobacterium psychrophilum (strain ATCC 49511 / DSM 21280 / CIP 103535 / JIP02/86).